We begin with the raw amino-acid sequence, 343 residues long: S-adenosylmethionine:tRNA ribosyltransferase-isomerase (343 aa).

This sequence belongs to the QueA family. In terms of assembly, monomer.

It is found in the cytoplasm. The catalysed reaction is 7-aminomethyl-7-carbaguanosine(34) in tRNA + S-adenosyl-L-methionine = epoxyqueuosine(34) in tRNA + adenine + L-methionine + 2 H(+). Its pathway is tRNA modification; tRNA-queuosine biosynthesis. Functionally, transfers and isomerizes the ribose moiety from AdoMet to the 7-aminomethyl group of 7-deazaguanine (preQ1-tRNA) to give epoxyqueuosine (oQ-tRNA). The polypeptide is S-adenosylmethionine:tRNA ribosyltransferase-isomerase (Pelobacter propionicus (strain DSM 2379 / NBRC 103807 / OttBd1)).